The chain runs to 528 residues: UDP-glucuronosyltransferase 2A1 (528 aa).

The first 21 residues, 1-21 (MLKNILLCSLQISLLGMSLGG), serve as a signal peptide directing secretion. At 22 to 494 (NVLIWPMEGS…FQYHSLDVIG (473 aa)) the chain is on the extracellular side. Asn49 carries an N-linked (GlcNAc...) asparagine glycan. N6-succinyllysine is present on Lys135. A glycan (N-linked (GlcNAc...) asparagine) is linked at Asn314. A helical transmembrane segment spans residues 495–515 (FLLACVASAILLVAKCCLFIF). The Cytoplasmic portion of the chain corresponds to 516 to 528 (QKVGKTGKKKKRD).

Belongs to the UDP-glycosyltransferase family.

It localises to the membrane. The catalysed reaction is glucuronate acceptor + UDP-alpha-D-glucuronate = acceptor beta-D-glucuronoside + UDP + H(+). It catalyses the reaction 16beta,17beta-estriol + UDP-alpha-D-glucuronate = 16beta,17beta-estriol 16-O-(beta-D-glucuronate) + UDP + H(+). The enzyme catalyses 16alpha,17alpha-estriol + UDP-alpha-D-glucuronate = 16alpha,17alpha-estriol 16-O-(beta-D-glucuronate) + UDP + H(+). It carries out the reaction 17alpha-estradiol + UDP-alpha-D-glucuronate = 17alpha-estradiol 17-O-(beta-D-glucuronate) + UDP + H(+). The catalysed reaction is 17alpha-estradiol + UDP-alpha-D-glucuronate = 17alpha-estradiol 3-O-(beta-D-glucuronate) + UDP + H(+). It catalyses the reaction 17beta-estradiol + UDP-alpha-D-glucuronate = 17beta-estradiol 3-O-(beta-D-glucuronate) + UDP + H(+). The enzyme catalyses 17beta-estradiol + UDP-alpha-D-glucuronate = 17beta-estradiol 17-O-(beta-D-glucuronate) + UDP + H(+). It carries out the reaction testosterone + UDP-alpha-D-glucuronate = testosterone 17-O-(beta-D-glucuronate) + UDP + H(+). The catalysed reaction is epitestosterone + UDP-alpha-D-glucuronate = epitestosterone 17-O-(beta-D-glucuronate) + UDP + H(+). It catalyses the reaction lithocholate + UDP-alpha-D-glucuronate = lithocholoyl-3-O-(beta-D-glucuronate) + UDP + H(+). The enzyme catalyses lithocholate + UDP-alpha-D-glucuronate = lithocholoyl-24-O-(beta-D-glucuronate) + UDP. It carries out the reaction deoxycholate + UDP-alpha-D-glucuronate = deoxycholoyl-24-O-(beta-D-glucuronate) + UDP. The catalysed reaction is hyodeoxycholate + UDP-alpha-D-glucuronate = hyodeoxycholate 6-O-(beta-D-glucuronate) + UDP + H(+). It catalyses the reaction hyocholate + UDP-alpha-D-glucuronate = hyocholoyl-24-O-(beta-D-glucuronate) + UDP. UDP-glucuronosyltransferase (UGT) that catalyzes phase II biotransformation reactions in which lipophilic substrates are conjugated with glucuronic acid to increase the metabolite's water solubility, thereby facilitating excretion into either the urine or bile. Essential for the elimination and detoxification of drugs, xenobiotics and endogenous compounds. Catalyzes the glucuronidation of endogenous steroid hormones such as androgens (testosterones) and estrogens (estradiol and estriol). Contributes to bile acid (BA) detoxification by catalyzing the glucuronidation of BA substrates, which are natural detergents for dietary lipids absorption. Shows a high affinity to aliphatic odorants such as citronellol as well as olfactory tissue specificity, and therefore may be involved in olfaction. This Mus musculus (Mouse) protein is UDP-glucuronosyltransferase 2A1.